The sequence spans 150 residues: Transcriptional repressor NrdR (150 aa).

A zinc finger spans residues 3 to 34 (CPFCQHDHSKVIDSRVIDAGSAIRRRRECSKC). An ATP-cone domain is found at 46-136 (LLVVKRNGVT…VYKSFDSADD (91 aa)).

This sequence belongs to the NrdR family. Zn(2+) is required as a cofactor.

Functionally, negatively regulates transcription of bacterial ribonucleotide reductase nrd genes and operons by binding to NrdR-boxes. The polypeptide is Transcriptional repressor NrdR (Corynebacterium glutamicum (strain ATCC 13032 / DSM 20300 / JCM 1318 / BCRC 11384 / CCUG 27702 / LMG 3730 / NBRC 12168 / NCIMB 10025 / NRRL B-2784 / 534)).